We begin with the raw amino-acid sequence, 203 residues long: Orotate phosphoribosyltransferase (203 aa).

5-phospho-alpha-D-ribose 1-diphosphate contacts are provided by residues Arg-94, Lys-98, His-100, and Glu-120–Ser-128. Ser-124 serves as a coordination point for orotate.

This sequence belongs to the purine/pyrimidine phosphoribosyltransferase family. PyrE subfamily. In terms of assembly, homodimer. Requires Mg(2+) as cofactor.

It carries out the reaction orotidine 5'-phosphate + diphosphate = orotate + 5-phospho-alpha-D-ribose 1-diphosphate. It participates in pyrimidine metabolism; UMP biosynthesis via de novo pathway; UMP from orotate: step 1/2. Catalyzes the transfer of a ribosyl phosphate group from 5-phosphoribose 1-diphosphate to orotate, leading to the formation of orotidine monophosphate (OMP). This chain is Orotate phosphoribosyltransferase, found in Staphylococcus aureus (strain MSSA476).